The following is a 132-amino-acid chain: Interleukin-5 (132 aa).

Residues 1-19 (MRMLLCLNVLTLSCVWAIA) form the signal peptide. 3 N-linked (GlcNAc...) asparagine glycosylation sites follow: Asn45, Asn74, and Asn88.

It belongs to the IL-5 family. Homodimer; disulfide-linked. Interacts with IL5RA. Interacts with CSF2RB.

It is found in the secreted. Homodimeric cytokine expressed predominantly by T-lymphocytes and NK cells that plays an important role in the survival, differentiation, and chemotaxis of eosinophils. Acts also on activated and resting B-cells to induce immunoglobulin production, growth, and differentiation. Mechanistically, exerts its biological effects through a receptor composed of IL5RA subunit and the cytokine receptor common subunit beta/CSF2RB. Binding to the receptor leads to activation of various kinases including LYN, SYK and JAK2 and thereby propagates signals through the RAS-MAPK and JAK-STAT5 pathways respectively. This chain is Interleukin-5 (Il5), found in Rattus norvegicus (Rat).